A 506-amino-acid chain; its full sequence is Histidine--tRNA ligase, mitochondrial (506 aa).

The N-terminal 33 residues, 1 to 33 (MPQLGLLPGRAWTVLLGLLRPPPGALCIRAVRS), are a transit peptide targeting the mitochondrion. Serine 67 is modified (phosphoserine). L-histidine contacts are provided by residues 131-133 (DLT), arginine 158, glutamine 174, aspartate 178, arginine 327, and 331-332 (YY). N6-acetyllysine is present on lysine 444.

Belongs to the class-II aminoacyl-tRNA synthetase family. In terms of assembly, homodimer.

The protein localises to the mitochondrion. The catalysed reaction is tRNA(His) + L-histidine + ATP = L-histidyl-tRNA(His) + AMP + diphosphate + H(+). In terms of biological role, mitochondrial aminoacyl-tRNA synthetase that catalyzes the ATP-dependent ligation of histidine to the 3'-end of its cognate tRNA, via the formation of an aminoacyl-adenylate intermediate (His-AMP). This Bos taurus (Bovine) protein is Histidine--tRNA ligase, mitochondrial (HARS2).